The following is a 368-amino-acid chain: Proton-coupled zinc antiporter SLC30A8 (368 aa).

Topologically, residues 1–78 are cytoplasmic; the sequence is MEFLERTYLV…AKWRLCAASA (78 aa). Zn(2+) is bound by residues H51, C52, and H53. Residues 51 to 53 carry the HCH Motif; seals regulatory zinc-binding pocket motif; sequence HCH. A helical transmembrane segment spans residues 79-99; it reads ICFFFMVAEVVGGHVAGSLAV. The Lumenal, vesicle portion of the chain corresponds to 100 to 102; that stretch reads LTD. Residues 103–123 traverse the membrane as a helical segment; that stretch reads AAHLLIDLTSFLLSLFSLWLS. Residues H105 and D109 each contribute to the Zn(2+) site. Residues 124-139 are Cytoplasmic-facing; it reads SRPPSKRLTFGWYRAE. A helical membrane pass occupies residues 140 to 160; the sequence is ILGALLSVLCIWVVTGVLVYL. Residues 161-174 lie on the Lumenal, vesicle side of the membrane; that stretch reads ACERLLYPDYQIQA. Residues 175–195 form a helical membrane-spanning segment; the sequence is GIMITVSGCAVAANIVLTLIL. Over 196-216 the chain is Cytoplasmic; that stretch reads HQRHLGHNHKDAQANASVRAA. A helical transmembrane segment spans residues 217-237; that stretch reads FVHALGDVFQSTSVLISALII. The Zn(2+) site is built by H219 and D223. Topologically, residues 238 to 245 are lumenal, vesicle; the sequence is YFKPDYKM. Residues 246 to 266 form a helical membrane-spanning segment; that stretch reads ADPVCTFISSVLALASTVMIL. At 267-368 the chain is on the cytoplasmic side; sequence KDFSILLMEG…SCLLCEDPQD (102 aa). Zn(2+) contacts are provided by H300, H317, H344, E351, C360, and C363.

The protein belongs to the cation diffusion facilitator (CDF) transporter (TC 2.A.4) family. SLC30A subfamily. In terms of assembly, homodimer. In terms of tissue distribution, expressed in endocrine pancreatic islet alpha and beta cells. May be more abundant in beta cells than in alpha cells. Expressed in cubical epithelium lining thyroid follicles (at protein level). In the adrenal gland, detected in the cortex, but not in the medulla (at protein level).

The protein localises to the cytoplasmic vesicle. It localises to the secretory vesicle membrane. Its subcellular location is the cell membrane. The catalysed reaction is Zn(2+)(in) + 2 H(+)(out) = Zn(2+)(out) + 2 H(+)(in). Functionally, proton-coupled zinc ion antiporter mediating the entry of zinc into the lumen of pancreatic beta cell secretory granules, thereby regulating insulin secretion. This chain is Proton-coupled zinc antiporter SLC30A8, found in Rattus norvegicus (Rat).